The following is a 342-amino-acid chain: UDP-glucuronic acid decarboxylase 3 (342 aa).

Residues 1–11 are compositionally biased toward polar residues; the sequence is MAATSEKQNTT. A disordered region spans residues 1–22; it reads MAATSEKQNTTKPPPSPSPLRN. 61–86 lines the NAD(+) pocket; it reads DNYFTGSKENLKKWIGHPRFELIRHD. R170 provides a ligand contact to substrate. Y173 acts as the Proton acceptor in catalysis. An NAD(+)-binding site is contributed by 173–177; the sequence is YDEGK. Position 202 (N202) interacts with substrate. Residue R214 coordinates NAD(+). Substrate-binding positions include 215–219, 232–239, and 299–303; these read VVSNF, QKPGTQTR, and DPRQR.

It belongs to the NAD(P)-dependent epimerase/dehydratase family. UDP-glucuronic acid decarboxylase subfamily. NAD(+) is required as a cofactor. As to expression, ubiquitous.

It localises to the cytoplasm. It carries out the reaction UDP-alpha-D-glucuronate + H(+) = UDP-alpha-D-xylose + CO2. Its pathway is nucleotide-sugar biosynthesis; UDP-alpha-D-xylose biosynthesis; UDP-alpha-D-xylose from UDP-alpha-D-glucuronate: step 1/1. Its function is as follows. Catalyzes the NAD-dependent decarboxylation of UDP-glucuronic acid to UDP-xylose. Necessary for the biosynthesis of the core tetrasaccharide in glycosaminoglycan biosynthesis. The polypeptide is UDP-glucuronic acid decarboxylase 3 (UXS3) (Arabidopsis thaliana (Mouse-ear cress)).